The primary structure comprises 364 residues: Protein-glutamate methylesterase/protein-glutamine glutaminase (364 aa).

The 119-residue stretch at 5–123 (RVLVVDDTIL…PAANKAALAN (119 aa)) folds into the Response regulatory domain. Aspartate 56 is subject to 4-aspartylphosphate. In terms of domain architecture, CheB-type methylesterase spans 174 to 364 (EIVVIGISTG…QEIVHTVKLY (191 aa)). Catalysis depends on residues serine 181, histidine 208, and aspartate 306.

The protein belongs to the CheB family. Post-translationally, phosphorylated by CheA. Phosphorylation of the N-terminal regulatory domain activates the methylesterase activity.

The protein resides in the cytoplasm. The catalysed reaction is [protein]-L-glutamate 5-O-methyl ester + H2O = L-glutamyl-[protein] + methanol + H(+). It catalyses the reaction L-glutaminyl-[protein] + H2O = L-glutamyl-[protein] + NH4(+). Involved in chemotaxis. Part of a chemotaxis signal transduction system that modulates chemotaxis in response to various stimuli. Catalyzes the demethylation of specific methylglutamate residues introduced into the chemoreceptors (methyl-accepting chemotaxis proteins or MCP) by CheR. Also mediates the irreversible deamidation of specific glutamine residues to glutamic acid. The sequence is that of Protein-glutamate methylesterase/protein-glutamine glutaminase from Desulfotalea psychrophila (strain LSv54 / DSM 12343).